A 432-amino-acid polypeptide reads, in one-letter code: Pachytene checkpoint protein 2 homolog (432 aa).

The residue at position 1 (Met1) is an N-acetylmethionine. 179–186 is an ATP binding site; it reads GPPGTGKT.

It belongs to the AAA ATPase family. PCH2 subfamily. As to quaternary structure, specifically interacts with the ligand binding domain of the thyroid receptor (TR). This interaction does not require the presence of thyroid hormone for its interaction. Interacts with proteasome subunit PSMA8; to participate in meiosis progression during spermatogenesis.

Plays a key role in chromosome recombination and chromosome structure development during meiosis. Required at early steps in meiotic recombination that leads to non-crossovers pathways. Also needed for efficient completion of homologous synapsis by influencing crossover distribution along the chromosomes affecting both crossovers and non-crossovers pathways. Also required for development of higher-order chromosome structures and is needed for synaptonemal-complex formation. In males, required for efficient synapsis of the sex chromosomes and for sex body formation. Promotes early steps of the DNA double-strand breaks (DSBs) repair process upstream of the assembly of RAD51 complexes. Required for depletion of HORMAD1 and HORMAD2 from synapsed chromosomes. This chain is Pachytene checkpoint protein 2 homolog (TRIP13), found in Canis lupus familiaris (Dog).